The chain runs to 165 residues: MLILGIDPGTAIMGYGLIEKKGNRLFPVDYACWRTPAHTPMPERLLMLYHEIEAYIKEKQPHHVAVEELFFNRNTTTAISVGQARGVVLLAAAQCGLPVYEYTPLQVKQAVAGYGRADKQQIQQMVRALLGLQEIPKPDDTADALAIAICHAHSVNLLNRMGGAL.

Active-site residues include aspartate 7, glutamate 67, and aspartate 140. Residues aspartate 7, glutamate 67, and aspartate 140 each coordinate Mg(2+).

Belongs to the RuvC family. In terms of assembly, homodimer which binds Holliday junction (HJ) DNA. The HJ becomes 2-fold symmetrical on binding to RuvC with unstacked arms; it has a different conformation from HJ DNA in complex with RuvA. In the full resolvosome a probable DNA-RuvA(4)-RuvB(12)-RuvC(2) complex forms which resolves the HJ. Mg(2+) is required as a cofactor.

It localises to the cytoplasm. The catalysed reaction is Endonucleolytic cleavage at a junction such as a reciprocal single-stranded crossover between two homologous DNA duplexes (Holliday junction).. In terms of biological role, the RuvA-RuvB-RuvC complex processes Holliday junction (HJ) DNA during genetic recombination and DNA repair. Endonuclease that resolves HJ intermediates. Cleaves cruciform DNA by making single-stranded nicks across the HJ at symmetrical positions within the homologous arms, yielding a 5'-phosphate and a 3'-hydroxyl group; requires a central core of homology in the junction. The consensus cleavage sequence is 5'-(A/T)TT(C/G)-3'. Cleavage occurs on the 3'-side of the TT dinucleotide at the point of strand exchange. HJ branch migration catalyzed by RuvA-RuvB allows RuvC to scan DNA until it finds its consensus sequence, where it cleaves and resolves the cruciform DNA. The sequence is that of Crossover junction endodeoxyribonuclease RuvC from Desulfitobacterium hafniense (strain DSM 10664 / DCB-2).